Reading from the N-terminus, the 379-residue chain is LIM/homeobox protein Lhx9 (379 aa).

2 consecutive LIM zinc-binding domains span residues 51–112 and 113–175; these read TLCA…RFSV and QRCA…LVQG. Disordered regions lie at residues 232 to 257 and 310 to 379; these read ENDT…TSFK and RQEN…TNLF. Residues 248 to 257 are compositionally biased toward basic residues; that stretch reads KTKRMRTSFK. The segment at residues 249–308 is a DNA-binding region (homeobox); it reads TKRMRTSFKHHQLRTTKSYFAINHNPDAKDLKQLAQKTGLTKRVLQVWFQNARAKFRRNL. Residues 326–379 are compositionally biased toward polar residues; it reads APASTDSAALTPTGAASTLSDLTSPSLNVGASVTPNMDSHESGSPSQTTLTNLF.

In terms of tissue distribution, isoform 1 and isoform 3 are expressed in ovary, testis, brain and heart. Isoform 4 and isoform 5 are expressed in brain.

It localises to the nucleus. May be involved in gonadal development. In Glandirana rugosa (Japanese wrinkled frog), this protein is LIM/homeobox protein Lhx9 (lhx9).